The sequence spans 203 residues: ATP-dependent Clp protease proteolytic subunit (203 aa).

The active-site Nucleophile is the serine 107. Histidine 132 is an active-site residue.

The protein belongs to the peptidase S14 family. In terms of assembly, fourteen ClpP subunits assemble into 2 heptameric rings which stack back to back to give a disk-like structure with a central cavity, resembling the structure of eukaryotic proteasomes.

It is found in the cytoplasm. It carries out the reaction Hydrolysis of proteins to small peptides in the presence of ATP and magnesium. alpha-casein is the usual test substrate. In the absence of ATP, only oligopeptides shorter than five residues are hydrolyzed (such as succinyl-Leu-Tyr-|-NHMec, and Leu-Tyr-Leu-|-Tyr-Trp, in which cleavage of the -Tyr-|-Leu- and -Tyr-|-Trp bonds also occurs).. Functionally, cleaves peptides in various proteins in a process that requires ATP hydrolysis. Has a chymotrypsin-like activity. Plays a major role in the degradation of misfolded proteins. The protein is ATP-dependent Clp protease proteolytic subunit of Shewanella sediminis (strain HAW-EB3).